Here is a 556-residue protein sequence, read N- to C-terminus: Phenylalanine--tRNA ligase beta subunit (556 aa).

The region spanning 278 to 354 is the B5 domain; it reads LTPKEFEVSF…IAYGYNNIDP (77 aa). Mg(2+)-binding residues include Asp332, Asp338, Glu341, and Asp342.

The protein belongs to the phenylalanyl-tRNA synthetase beta subunit family. Type 2 subfamily. In terms of assembly, tetramer of two alpha and two beta subunits. Requires Mg(2+) as cofactor.

The protein localises to the cytoplasm. The enzyme catalyses tRNA(Phe) + L-phenylalanine + ATP = L-phenylalanyl-tRNA(Phe) + AMP + diphosphate + H(+). The chain is Phenylalanine--tRNA ligase beta subunit from Pyrococcus furiosus (strain ATCC 43587 / DSM 3638 / JCM 8422 / Vc1).